We begin with the raw amino-acid sequence, 119 residues long: Methylglyoxal synthase (119 aa).

The MGS-like domain maps to 1–119; that stretch reads MKIALIAHDK…ESAKLIMADI (119 aa). Substrate-binding positions include H8, K12, 34 to 37, and 54 to 55; these read TGTT and SG. The active-site Proton donor/acceptor is the D60. H87 provides a ligand contact to substrate.

This sequence belongs to the methylglyoxal synthase family.

The catalysed reaction is dihydroxyacetone phosphate = methylglyoxal + phosphate. Functionally, catalyzes the formation of methylglyoxal from dihydroxyacetone phosphate. The sequence is that of Methylglyoxal synthase from Clostridium perfringens (strain 13 / Type A).